The sequence spans 320 residues: MKIIFAGTPEFAATALAALLKTSHEIIAVYTQPDRKAGRGQKLTPSPVKQLVLEYNIPVYQPLHFKASTEEGLAAQQELAALGADVMVVAAYGLILPQAVLDTPKYGCLNIHGSLLPRWRGAAPIQRAIATGDDETGITIMQMAAGLDTGDMMYKTYCPITSEDTSATLHDKLAAQGATAICAVLESEETLQKYLAEREVQDESLTVYAHKLVKSEARIDWSMNAVQVDRNIRAFNPWPVAFIQLDENNALRVWYSTISNQNKADAKAGEIIAIDKQGVHVACGENTFICLTSVQWPGGKALNAQQIAQTQKLHVGQILP.

A (6S)-5,6,7,8-tetrahydrofolate-binding site is contributed by serine 114–proline 117.

This sequence belongs to the Fmt family.

It carries out the reaction L-methionyl-tRNA(fMet) + (6R)-10-formyltetrahydrofolate = N-formyl-L-methionyl-tRNA(fMet) + (6S)-5,6,7,8-tetrahydrofolate + H(+). In terms of biological role, attaches a formyl group to the free amino group of methionyl-tRNA(fMet). The formyl group appears to play a dual role in the initiator identity of N-formylmethionyl-tRNA by promoting its recognition by IF2 and preventing the misappropriation of this tRNA by the elongation apparatus. This Acinetobacter baumannii (strain SDF) protein is Methionyl-tRNA formyltransferase.